A 49-amino-acid chain; its full sequence is Large ribosomal subunit protein bL33 (49 aa).

Belongs to the bacterial ribosomal protein bL33 family.

The protein is Large ribosomal subunit protein bL33 of Lacticaseibacillus casei (strain BL23) (Lactobacillus casei).